The primary structure comprises 143 residues: Period circadian protein (143 aa).

Positions 25 to 130 (NSKPVTAPTQ…GPSLAADNSI (106 aa)) are disordered. 2 stretches are compositionally biased toward low complexity: residues 71–93 (SGNC…ITGT) and 114–126 (GGAA…SLAA).

Forms a heterodimer with timeless (TIM); the complex then translocates into the nucleus. Phosphorylated with a circadian rhythmicity, probably by the double-time protein (dbt). Phosphorylation could be implicated in the stability of per monomer and in the formation of heterodimer per-tim.

It is found in the nucleus. Its subcellular location is the cytoplasm. It localises to the perinuclear region. Its function is as follows. Essential for biological clock functions. Determines the period length of circadian and ultradian rhythms; an increase in PER dosage leads to shortened circadian rhythms and a decrease leads to lengthened circadian rhythms. Essential for the circadian rhythmicity of locomotor activity, eclosion behavior, and for the rhythmic component of the male courtship song that originates in the thoracic nervous system. The biological cycle depends on the rhythmic formation and nuclear localization of the TIM-PER complex. Light induces the degradation of TIM, which promotes elimination of PER. Nuclear activity of the heterodimer coordinatively regulates PER and TIM transcription through a negative feedback loop. Behaves as a negative element in circadian transcriptional loop. Does not appear to bind DNA, suggesting indirect transcriptional inhibition. This chain is Period circadian protein (per), found in Drosophila picticornis (Fruit fly).